The following is a 329-amino-acid chain: uncharacterized protein (329 aa).

9 consecutive transmembrane segments (helical) span residues 5–24 (NLLL…FLTV), 34–56 (IAVA…YLIF), 92–114 (FGYI…LEWG), 124–146 (IIFF…VLFY), 159–181 (SANF…LLSL), 196–218 (TAHR…LQYL), 231–253 (FSIV…LGAY), 263–285 (LIGV…RLFG), and 306–328 (FWLF…RILT).

The protein resides in the cell membrane. This is an uncharacterized protein from Archaeoglobus fulgidus (strain ATCC 49558 / DSM 4304 / JCM 9628 / NBRC 100126 / VC-16).